Consider the following 494-residue polypeptide: MPLSLYNTLTRHQEPFEPLEPGHVKMYCCGVTVYDYCHLGHARSYIVWDVVRRYLQWSGYQVRYVQNFTDIDDKILNRARQENSTMQAVSDRFIQAYHEDMQRLNILLADVYPKATDVIPEIIQLIQTLVDQGYAYAVDGDVYYAVDRFPDYGKLSGRQLEQMQAGASGRVDDTEPKKRHPLDFALWKAAKSEELSVYQPWDSPWGKGRPGWHIECSAMVRKELGHTIDIHCGGMDLIFPHHENEIAQSEAATRADLAHYWLHNGFVNIQGEKMSKSLGNFKTIRAFLNSGVDPMMLRLFVLQAHYRKPIDFSDETITAAQHSWQTLQEGLRFGYDYGQQLRWEDYQDSSFGDPACMRIPDSGAEIERFRAAMDDDLNTASAIAVLFELAKELRREGNLISHAGQPQLDPQELRSIWQTLVCLAQVLGLEVSPETEVTADDGLSEAEIEDLIQQRQAARKAKNYAEGDRIRNELKTKGITLIDQKDGSTKWIRD.

Zn(2+) is bound at residue cysteine 29. The 'HIGH' region signature appears at 31-41 (VTVYDYCHLGH). Positions 216, 241, and 245 each coordinate Zn(2+). Residues 273–277 (KMSKS) carry the 'KMSKS' region motif. Lysine 276 lines the ATP pocket.

It belongs to the class-I aminoacyl-tRNA synthetase family. Monomer. Requires Zn(2+) as cofactor.

It localises to the cytoplasm. The enzyme catalyses tRNA(Cys) + L-cysteine + ATP = L-cysteinyl-tRNA(Cys) + AMP + diphosphate. The sequence is that of Cysteine--tRNA ligase from Cyanothece sp. (strain PCC 7425 / ATCC 29141).